The sequence spans 99 residues: Nucleoid-associated protein LACR_0106 (99 aa).

Belongs to the YbaB/EbfC family. Homodimer.

The protein localises to the cytoplasm. The protein resides in the nucleoid. Functionally, binds to DNA and alters its conformation. May be involved in regulation of gene expression, nucleoid organization and DNA protection. In Lactococcus lactis subsp. cremoris (strain SK11), this protein is Nucleoid-associated protein LACR_0106.